Reading from the N-terminus, the 393-residue chain is Pyrimidine monooxygenase RutA (393 aa).

Residues 79-80 (IK), Asn145, Glu154, 170-171 (RY), and Ser220 contribute to the FMN site.

Belongs to the NtaA/SnaA/DszA monooxygenase family. RutA subfamily.

It carries out the reaction uracil + FMNH2 + NADH + O2 = (Z)-3-ureidoacrylate + FMN + NAD(+) + H2O + H(+). The catalysed reaction is thymine + FMNH2 + NADH + O2 = (Z)-2-methylureidoacrylate + FMN + NAD(+) + H2O + H(+). Functionally, catalyzes the pyrimidine ring opening between N-3 and C-4 by an unusual flavin hydroperoxide-catalyzed mechanism, adding oxygen atoms in the process to yield ureidoacrylate peracid, that immediately reacts with FMN forming ureidoacrylate and FMN-N(5)-oxide. The FMN-N(5)-oxide reacts spontaneously with NADH to produce FMN. Requires the flavin reductase RutF to regenerate FMN in vivo. The protein is Pyrimidine monooxygenase RutA of Escherichia coli O9:H4 (strain HS).